Reading from the N-terminus, the 346-residue chain is Short-wave-sensitive opsin 1 (346 aa).

Residues 1-31 lie on the Extracellular side of the membrane; the sequence is MSGEDEFYLFQNISSVGPWDGPQYHIAPVWA. A glycan (N-linked (GlcNAc...) asparagine) is linked at N12. A helical transmembrane segment spans residues 32-56; sequence FHLQAAFMGFVFFAGTPLNATVLVA. Over 57–68 the chain is Cytoplasmic; the sequence is TLHYKKLRQPLN. Residues 69–94 traverse the membrane as a helical segment; sequence YILVNVSLGGFLFCIFSVFTVFIASC. The Extracellular segment spans residues 95 to 108; sequence HGYFLFGRHVCALE. A disulfide bridge connects residues C105 and C182. Residues 109-128 traverse the membrane as a helical segment; sequence AFLGSVAGLVTGWSLAFLAF. At 129 to 147 the chain is on the cytoplasmic side; the sequence is ERYLVICKPFGNIRFNSKH. The chain crosses the membrane as a helical span at residues 148-171; the sequence is ALTVVLITWTIGIGVSIPPFFGWS. At 172 to 197 the chain is on the extracellular side; that stretch reads RFIPEGLQCSCGPDWYTVGTKYRSEH. Residues 198–225 traverse the membrane as a helical segment; that stretch reads YTWFLFIFCFIIPLSLICFSYFQLLRTL. Topologically, residues 226 to 247 are cytoplasmic; the sequence is RAVAAQQQESATTQKAEREVSH. A helical transmembrane segment spans residues 248–271; it reads MVVVMVGSFCLCYVPYAALAMYMV. Over 272–279 the chain is Extracellular; sequence NNRNHGLY. Residues 280–304 form a helical membrane-spanning segment; the sequence is LRLVTIPAFFSKSSCVYNPIIYCFM. K291 carries the post-translational modification N6-(retinylidene)lysine. At 305–346 the chain is on the cytoplasmic side; sequence NKQFRACILEMVCRKPMTDESDMSGSQKTEVSTVSSSKVGPH. The segment at 322-346 is disordered; the sequence is TDESDMSGSQKTEVSTVSSSKVGPH. Positions 330-346 are enriched in low complexity; the sequence is SQKTEVSTVSSSKVGPH.

Belongs to the G-protein coupled receptor 1 family. Opsin subfamily. Phosphorylated on some or all of the serine and threonine residues present in the C-terminal region. In terms of tissue distribution, expressed in cone photoreceptor cells.

It is found in the cell membrane. The protein resides in the photoreceptor inner segment. Its subcellular location is the cell projection. It localises to the cilium. The protein localises to the photoreceptor outer segment. It is found in the cytoplasm. The protein resides in the perinuclear region. Visual pigments are the light-absorbing molecules that mediate vision. They consist of an apoprotein, opsin, covalently linked to cis-retinal. Required for the maintenance of cone outer segment organization in the ventral retina, but not essential for the maintenance of functioning cone photoreceptors. Involved in ensuring correct abundance and localization of retinal membrane proteins. May increase spectral sensitivity in dim light. This is Short-wave-sensitive opsin 1 (Opn1sw) from Rattus norvegicus (Rat).